Here is a 380-residue protein sequence, read N- to C-terminus: XK-related protein 9 (380 aa).

8 consecutive transmembrane segments (helical) span residues 10 to 30 (LLSAAGLVMYVADVCTDAALV), 39 to 59 (VVCAALTLLFIVVGLLVTQVF), 81 to 101 (LPVVSKRGLATLHLFGVGIFI), 167 to 187 (CSLVQLVGMSFSFMNAAWALV), 228 to 248 (ALLLIFSIYSTVGLAIVWLLG), 264 to 284 (SLEFLYRAIVGVILTFTFFNV), 294 to 314 (ITYYFLHSLINVLSLLLLFVL), and 329 to 349 (TLMAACSVLGLVCLVLYYLLL).

It belongs to the XK family.

It is found in the cell membrane. The enzyme catalyses a 1,2-diacyl-sn-glycero-3-phospho-L-serine(in) = a 1,2-diacyl-sn-glycero-3-phospho-L-serine(out). Functionally, phospholipid scramblase that promotes phosphatidylserine exposure on apoptotic cell surface. Phosphatidylserine is a specific marker only present at the surface of apoptotic cells and acts as a specific signal for engulfment. The sequence is that of XK-related protein 9 from Tetraodon nigroviridis (Spotted green pufferfish).